A 109-amino-acid polypeptide reads, in one-letter code: Nucleoid-associated protein ETA_24730 (109 aa).

This sequence belongs to the YbaB/EbfC family. In terms of assembly, homodimer.

It localises to the cytoplasm. The protein localises to the nucleoid. Functionally, binds to DNA and alters its conformation. May be involved in regulation of gene expression, nucleoid organization and DNA protection. The protein is Nucleoid-associated protein ETA_24730 of Erwinia tasmaniensis (strain DSM 17950 / CFBP 7177 / CIP 109463 / NCPPB 4357 / Et1/99).